A 319-amino-acid polypeptide reads, in one-letter code: Aspartate carbamoyltransferase catalytic subunit (319 aa).

Carbamoyl phosphate is bound by residues R59 and T60. K87 is an L-aspartate binding site. Positions 109, 137, and 140 each coordinate carbamoyl phosphate. L-aspartate-binding residues include R170 and R224. Carbamoyl phosphate is bound by residues G265 and P266.

The protein belongs to the aspartate/ornithine carbamoyltransferase superfamily. ATCase family. In terms of assembly, heterododecamer (2C3:3R2) of six catalytic PyrB chains organized as two trimers (C3), and six regulatory PyrI chains organized as three dimers (R2).

It catalyses the reaction carbamoyl phosphate + L-aspartate = N-carbamoyl-L-aspartate + phosphate + H(+). It functions in the pathway pyrimidine metabolism; UMP biosynthesis via de novo pathway; (S)-dihydroorotate from bicarbonate: step 2/3. Functionally, catalyzes the condensation of carbamoyl phosphate and aspartate to form carbamoyl aspartate and inorganic phosphate, the committed step in the de novo pyrimidine nucleotide biosynthesis pathway. This is Aspartate carbamoyltransferase catalytic subunit from Gemmatimonas aurantiaca (strain DSM 14586 / JCM 11422 / NBRC 100505 / T-27).